A 281-amino-acid chain; its full sequence is MVRVYIGRLPNRASDRDVEHFFRGYGKLSDVIMKNGFGFVDFQDQRDADDAVHDLNGKELCGERVILEFPRRKVGYNEERSGSGFRGREPTFRKGGERQFSNRYSRPCSTRFRLVIDNLSTRYSWQDIKDHIRKLGIEPTYSEAHKRNVNQAIVCFTSHDDLRDAMNKLQGEDLNGRKLKCTDETRDRSRSRSPRRRSRSRSPTRSRSPPARRRSPGSDRSDRKSRSASPKKRSDKRARSESKSRSRSGGRRSRSNSPPNRSPSPKKRRDNSSPRSGSASP.

Residues 2–72 (VRVYIGRLPN…ERVILEFPRR (71 aa)) enclose the RRM 1 domain. 2 stretches are compositionally biased toward basic and acidic residues: residues 78–97 (EERS…KGGE) and 168–190 (KLQG…DRSR). Disordered regions lie at residues 78-100 (EERS…ERQF) and 168-281 (KLQG…SASP). The RRM 2 domain occupies 112–186 (FRLVIDNLST…RKLKCTDETR (75 aa)). Positions 191–215 (SRSPRRRSRSRSPTRSRSPPARRRS) are enriched in basic residues. A compositionally biased stretch (basic and acidic residues) spans 216-225 (PGSDRSDRKS). Over residues 245-254 (RSRSGGRRSR) the composition is skewed to basic residues.

This sequence belongs to the splicing factor SR family. Extensively phosphorylated on serine residues in the RS domain.

Its subcellular location is the nucleus. Functionally, plays a functionally redundant role in spermatogenesis and growth rate control. Required for the development of somatic gonad structures and for progression from larval stage to adulthood. The protein is Probable splicing factor, arginine/serine-rich 2 (rsp-2) of Caenorhabditis elegans.